The chain runs to 156 residues: Ribosomal RNA large subunit methyltransferase H (156 aa).

Residues Leu73, Gly104, and 123-128 (LSPLTL) contribute to the S-adenosyl-L-methionine site.

This sequence belongs to the RNA methyltransferase RlmH family. In terms of assembly, homodimer.

It localises to the cytoplasm. The catalysed reaction is pseudouridine(1915) in 23S rRNA + S-adenosyl-L-methionine = N(3)-methylpseudouridine(1915) in 23S rRNA + S-adenosyl-L-homocysteine + H(+). Specifically methylates the pseudouridine at position 1915 (m3Psi1915) in 23S rRNA. This is Ribosomal RNA large subunit methyltransferase H from Photobacterium profundum (strain SS9).